A 209-amino-acid chain; its full sequence is Transcription antitermination protein NusB (209 aa).

This sequence belongs to the NusB family.

Functionally, involved in transcription antitermination. Required for transcription of ribosomal RNA (rRNA) genes. Binds specifically to the boxA antiterminator sequence of the ribosomal RNA (rrn) operons. In Crocosphaera subtropica (strain ATCC 51142 / BH68) (Cyanothece sp. (strain ATCC 51142)), this protein is Transcription antitermination protein NusB.